Consider the following 73-residue polypeptide: Conotoxin reg3a (73 aa).

Residues 1–20 form the signal peptide; it reads MMSKLRVLLTICLLLFPLSA. Positions 21–55 are excised as a propeptide; it reads LPLDGDQPADQPAKRMWNGKLAARKPRFDKYDLVR. Pro-59, Pro-60, Pro-65, and Pro-70 each carry 4-hydroxyproline. Residue Cys-72 is modified to Cysteine amide.

In terms of processing, contains 3 disulfide bonds. As to expression, expressed by the venom duct.

Its subcellular location is the secreted. This chain is Conotoxin reg3a, found in Conus regius (Crown cone).